A 359-amino-acid polypeptide reads, in one-letter code: MVLRNPDKKGIASALDERSGEIFRRIVESYLESGEPLGSRNLSRLLPISLSPASVRNVMSDLEDLGLIYSPHVSAGRLPTQTGLRFFVDAFMQVGNLSPEERASIERQVGPGNRDHSVENLLTEASQMLSGMSRGAGLVITTKSDPVLKHVEFIRLAPTKALAVLVGEHDQVENRIIELPAGITSAQLTEAANFVNAHLAGQTIPELRTQLEKVKETVRGELDALSQDLVERGLAIWSGSEGDGQPARLIVRGRANLLEGLEGTEDIERLRMLFDDLEKKDSLIEILNLAESGPGVRIFIGSENKLFSLSGSSLIVAPYRDSDDRIVGAVGVIGPTRLNYSRIVPMVDYTAQLMSRMSR.

The protein belongs to the HrcA family.

Negative regulator of class I heat shock genes (grpE-dnaK-dnaJ and groELS operons). Prevents heat-shock induction of these operons. This is Heat-inducible transcription repressor HrcA from Sinorhizobium medicae (strain WSM419) (Ensifer medicae).